The sequence spans 299 residues: tRNA uridine(34) hydroxylase (299 aa).

The 95-residue stretch at 132-226 folds into the Rhodanese domain; it reads AGRPVVMLDT…YFEEVGGAHY (95 aa). The active-site Cysteine persulfide intermediate is C186.

Belongs to the TrhO family.

The enzyme catalyses uridine(34) in tRNA + AH2 + O2 = 5-hydroxyuridine(34) in tRNA + A + H2O. Catalyzes oxygen-dependent 5-hydroxyuridine (ho5U) modification at position 34 in tRNAs. This is tRNA uridine(34) hydroxylase from Burkholderia mallei (strain NCTC 10247).